The primary structure comprises 494 residues: MLLKNCETDKQRDIRYACLFKELDVKGNGQVTLDNLISAFEKNDHPLKGNDEAIKMLFTAMDVNKDSVVDLSDFKKYASNAESQIWNGFQRIDLDHDGKIGINEINRYLSDLDNQSICNNELNHELSNEKVNKFSRFFEWAFPKRKANIALRGQASHKKNTDNDRSKKTTDSDLYVTYDQWRDFLLLVPRKQGSRLHTAYSYFYLFNEDVDLSSEGDVTLINDFIRGFGFFIAGGISGVISRTCTAPFDRLKVFLIARTDLSSILLNSKTDLLAKNPNADINKISSPLAKAVKSLYRQGGIKAFYVGNGLNVIKVFPESSIKFGSFEVTKKIMTKLEGCRDTKDLSKFSTYIAGGLAGMAAQFSVYPIDTLKFRVQCAPLDTKLKGNNLLFQTAKDMFREGGGQIILQRCHSRYSGHISLCCIRFGDFFCLKKMVYCQTGKDPEPTTRSGHSKQPGCTSNGCIQWNCRSFCCLSNQSFKNKTTSPRNICTSLCV.

The EF-hand 1 domain maps to 11-46; the sequence is QRDIRYACLFKELDVKGNGQVTLDNLISAFEKNDHP. Residues Lys65, Asp70, Asp93, Asp95, Asp97, Lys99, and Glu104 each coordinate Ca(2+). 3 EF-hand domains span residues 80-115, 120-155, and 156-191; these read NAESQIWNGFQRIDLDHDGKIGINEINRYLSDLDNQ, NELNHELSNEKVNKFSRFFEWAFPKRKANIALRGQA, and SHKKNTDNDRSKKTTDSDLYVTYDQWRDFLLLVPRK. Residues Thr161 and Ser166 each coordinate Ca(2+). Solcar repeat units lie at residues 225–332 and 345–434; these read IRGF…TKKI and LSKF…LKKM. The next 5 membrane-spanning stretches (helical) occupy residues 231 to 248, 307 to 326, 355 to 368, 409 to 428, and 458 to 475; these read FIAGGISGVISRTCTAPF, GNGLNVIKVFPESSIKFGSF, GLAGMAAQFSVYPI, RCHSRYSGHISLCCIRFGDF, and TSNGCIQWNCRSFCCLSN. Residues 452–494 form a Solcar 3; truncated repeat; it reads SKQPGCTSNGCIQWNCRSFCCLSNQSFKNKTTSPRNICTSLCV.

The protein belongs to the mitochondrial carrier (TC 2.A.29) family.

It is found in the mitochondrion inner membrane. In terms of biological role, calcium-dependent mitochondrial solute carrier. This chain is Truncated non-functional calcium-binding mitochondrial carrier SAL1-1 (SAL1), found in Saccharomyces cerevisiae (strain ATCC 204508 / S288c) (Baker's yeast).